The chain runs to 274 residues: Diaminopimelate epimerase (274 aa).

Residues Asn-11, Gln-44, and Asn-64 each coordinate substrate. Residue Cys-73 is the Proton donor of the active site. Substrate-binding positions include 74 to 75 (GN), Asn-157, Asn-190, and 208 to 209 (ER). The active-site Proton acceptor is the Cys-217. 218–219 (GS) lines the substrate pocket.

It belongs to the diaminopimelate epimerase family. In terms of assembly, homodimer.

It is found in the cytoplasm. It catalyses the reaction (2S,6S)-2,6-diaminopimelate = meso-2,6-diaminopimelate. Its pathway is amino-acid biosynthesis; L-lysine biosynthesis via DAP pathway; DL-2,6-diaminopimelate from LL-2,6-diaminopimelate: step 1/1. Catalyzes the stereoinversion of LL-2,6-diaminopimelate (L,L-DAP) to meso-diaminopimelate (meso-DAP), a precursor of L-lysine and an essential component of the bacterial peptidoglycan. The protein is Diaminopimelate epimerase of Proteus mirabilis (strain HI4320).